A 78-amino-acid polypeptide reads, in one-letter code: Large ribosomal subunit protein bL28 (78 aa).

It belongs to the bacterial ribosomal protein bL28 family.

This chain is Large ribosomal subunit protein bL28, found in Prochlorococcus marinus (strain MIT 9211).